The chain runs to 198 residues: Cyclin-dependent kinase inhibitor 1B (198 aa).

The segment covering 1 to 11 (MSNVRVSNGSP) has biased composition (polar residues). The disordered stretch occupies residues 1 to 34 (MSNVRVSNGSPSLERMDARQAEHPKPSACRNLFG). Serine 10 is subject to Phosphoserine; by UHMK1. A compositionally biased stretch (basic and acidic residues) spans 14-25 (ERMDARQAEHPK). The interaction with CDK2 stretch occupies residues 51–91 (DMEEASQRKWNFDFQNHKPLEGKYEWQEVEKGSLPEFYYRP). Tyrosine 74 carries the post-translational modification Phosphotyrosine; by SRC. Positions 85 to 198 (PEFYYRPPRP…KKPGLRRRQT (114 aa)) are disordered. Tyrosine 88 is subject to Phosphotyrosine; by ABL, LYN, SRC and JAK2. Tyrosine 89 carries the post-translational modification Phosphotyrosine. The span at 126–137 (EDTHLVDPKTDP) shows a compositional bias: basic and acidic residues. Positions 153 to 169 (KRPATDDSSTQNKRANR) match the Nuclear localization signal motif. Threonine 157 carries the phosphothreonine; by CaMK1, PKB/AKT1 and PIM1 modification. Phosphothreonine is present on threonine 170. The span at 175 to 186 (SDGSPNAGSVEQ) shows a compositional bias: polar residues. Residue threonine 187 is modified to Phosphothreonine; by PKB/AKT1, CDK1 and CDK2. Threonine 198 carries the post-translational modification Phosphothreonine; by CaMK1, PKB/AKT1, RPS6KA1, RPS6KA3 and PIM1.

Belongs to the CDI family. In terms of assembly, forms a ternary complex composed of CCNE1, CDK2 and CDKN1B. Interacts directly with CCNE1; the interaction is inhibited by CDK2-dependent phosphorylation on Thr-187. Interacts with COPS5, subunit of the COP9 signalosome complex; the interaction leads to CDKN1B degradation. Interacts with NUP50; the interaction leads to nuclear import and degradation of phosphorylated CDKN1B. Interacts with CCND1 and SNX6. Interacts (Thr-198-phosphorylated form) with 14-3-3 proteins, binds strongly YWHAQ, weakly YWHAE and YWHAH, but not YWHAB nor YWHAZ; the interaction with YWHAQ results in translocation to the cytoplasm. Interacts with AKT1 and LYN; the interactions lead to cytoplasmic mislocation, phosphorylation of CDKN1B and inhibition of cell cycle arrest. Forms a ternary complex with CCNA2 and CDK2; CDKN1B inhibits the kinase activity of CDK2 through conformational rearrangements. Interacts (unphosphorylated form) with CDK2. Forms a complex with CDK2 and SPDYA, but does not directly interact with SPDYA. Forms a ternary complex composed of cyclin D, CDK4 and CDKN1B. Interacts (phosphorylated on Tyr-88 and Tyr-89) with CDK4; the interaction is required for cyclin D and CDK4 complex assembly, induces nuclear translocation and activates the CDK4 kinase activity. Interacts with GRB2. Interacts with PIM1. Identified in a complex with SKP1, SKP2 and CKS1B. Interacts with UHMK1; the interaction leads to cytoplasmic mislocation, phosphorylation of CDKN1B and inhibition of cell cycle arrest. Also interacts with CDK1. Dephosphorylated on Thr-187 by PPM1H, leading to CDKN1B stability. Interacts with HSPA8; the interaction may be associated with susceptibility to ubiquitination. Post-translationally, phosphorylated; phosphorylation occurs on serine, threonine and tyrosine residues. Phosphorylation on Ser-10 is the major site of phosphorylation in resting cells, takes place at the G(0)-G(1) phase and leads to protein stability. Phosphorylation on other sites is greatly enhanced by mitogens, growth factors, cMYC and in certain cancer cell lines. The phosphorylated form found in the cytoplasm is inactivate. Phosphorylation on Thr-198 is required for interaction with 14-3-3 proteins. Phosphorylation on Thr-187, by CDK1 and CDK2 leads to protein ubiquitination and proteasomal degradation. Tyrosine phosphorylation promotes this process. Phosphorylation by PKB/AKT1 can be suppressed by LY294002, an inhibitor of the catalytic subunit of PI3K. Phosphorylation on Tyr-88 and Tyr-89 has no effect on binding CDK2, but is required for binding CDK4. Dephosphorylated on tyrosine residues by G-CSF. Ubiquitinated; in the cytoplasm by the KPC complex (composed of RNF123/KPC1 and UBAC1/KPC2) and, in the nucleus, by SCF(SKP2). The latter requires prior phosphorylation on Thr-187. Ubiquitinated; by a TRIM21-containing SCF(SKP2)-like complex; leads to its degradation. In terms of processing, subject to degradation in the lysosome. Interaction with SNX6 promotes lysosomal degradation. In terms of tissue distribution, expressed in kidney (at protein level). Expressed in all tissues tested. Highest levels in skeletal muscle, lowest in liver and kidney.

The protein localises to the nucleus. Its subcellular location is the cytoplasm. It localises to the endosome. Functionally, important regulator of cell cycle progression. Inhibits the kinase activity of CDK2 bound to cyclin A, but has little inhibitory activity on CDK2 bound to SPDYA. Involved in G1 arrest. Potent inhibitor of cyclin E- and cyclin A-CDK2 complexes. Forms a complex with cyclin type D-CDK4 complexes and is involved in the assembly, stability, and modulation of CCND1-CDK4 complex activation. Acts either as an inhibitor or an activator of cyclin type D-CDK4 complexes depending on its phosphorylation state and/or stoichometry. The sequence is that of Cyclin-dependent kinase inhibitor 1B from Homo sapiens (Human).